Reading from the N-terminus, the 97-residue chain is uncharacterized protein (97 aa).

Disordered regions lie at residues 1–20 (MTEG…IASD) and 52–97 (VPAA…GRRA).

This is an uncharacterized protein from Paracoccus pantotrophus (Thiosphaera pantotropha).